The following is a 131-amino-acid chain: Ribosome-binding factor A (131 aa).

Belongs to the RbfA family. Monomer. Binds 30S ribosomal subunits, but not 50S ribosomal subunits or 70S ribosomes.

The protein resides in the cytoplasm. Functionally, one of several proteins that assist in the late maturation steps of the functional core of the 30S ribosomal subunit. Associates with free 30S ribosomal subunits (but not with 30S subunits that are part of 70S ribosomes or polysomes). Required for efficient processing of 16S rRNA. May interact with the 5'-terminal helix region of 16S rRNA. The chain is Ribosome-binding factor A from Thermotoga sp. (strain RQ2).